Consider the following 82-residue polypeptide: Sec-independent protein translocase protein TatA (82 aa).

A helical transmembrane segment spans residues 1–21; sequence MHPPSITQLLIILLIIVLLFG. Positions 42-82 are disordered; the sequence is AVKEDEEDNQSEENTKSQIKQSESKNENVSKTHTDSQKQDT. Basic and acidic residues predominate over residues 63-82; sequence SESKNENVSKTHTDSQKQDT.

It belongs to the TatA/E family. The Tat system comprises two distinct complexes: a TatABC complex, containing multiple copies of TatA, TatB and TatC subunits, and a separate TatA complex, containing only TatA subunits. Substrates initially bind to the TatABC complex, which probably triggers association of the separate TatA complex to form the active translocon.

It is found in the cell inner membrane. In terms of biological role, part of the twin-arginine translocation (Tat) system that transports large folded proteins containing a characteristic twin-arginine motif in their signal peptide across membranes. TatA could form the protein-conducting channel of the Tat system. The protein is Sec-independent protein translocase protein TatA of Helicobacter hepaticus (strain ATCC 51449 / 3B1).